We begin with the raw amino-acid sequence, 216 residues long: Cytochrome c biogenesis ATP-binding export protein CcmA (216 aa).

The ABC transporter domain occupies 5–216 (ISVDTLLSAS…RKIRLDYRFV (212 aa)). 43-50 (GPNGAGKT) is a binding site for ATP.

It belongs to the ABC transporter superfamily. CcmA exporter (TC 3.A.1.107) family. In terms of assembly, the complex is composed of two ATP-binding proteins (CcmA) and two transmembrane proteins (CcmB).

Its subcellular location is the cell inner membrane. The enzyme catalyses heme b(in) + ATP + H2O = heme b(out) + ADP + phosphate + H(+). Its function is as follows. Part of the ABC transporter complex CcmAB involved in the biogenesis of c-type cytochromes; once thought to export heme, this seems not to be the case, but its exact role is uncertain. Responsible for energy coupling to the transport system. The sequence is that of Cytochrome c biogenesis ATP-binding export protein CcmA from Shewanella oneidensis (strain ATCC 700550 / JCM 31522 / CIP 106686 / LMG 19005 / NCIMB 14063 / MR-1).